Here is a 199-residue protein sequence, read N- to C-terminus: Ribonuclease HII (199 aa).

The 190-residue stretch at 10 to 199 (HLVAGVDEVG…VKRALGLASN (190 aa)) folds into the RNase H type-2 domain. D16, E17, and D108 together coordinate a divalent metal cation.

This sequence belongs to the RNase HII family. The cofactor is Mn(2+). It depends on Mg(2+) as a cofactor.

The protein localises to the cytoplasm. The enzyme catalyses Endonucleolytic cleavage to 5'-phosphomonoester.. In terms of biological role, endonuclease that specifically degrades the RNA of RNA-DNA hybrids. The protein is Ribonuclease HII of Klebsiella pneumoniae (strain 342).